The sequence spans 659 residues: MAAFSKYLTARNSSLAGAAFLLFCLLHKRRRALGLHGKKSGKPPLQNNEKEGKKERAVVDKVFLSRLSQILKIMVPRTFCKETGYLILIAVMLVSRTYCDVWMIQNGTLIESGIIGRSSKDFKRYLFNFIAAMPLISLVNNFLKYGLNELKLCFRVRLTRYLYEEYLQAFTYYKMGNLDNRIANPDQLLTQDVEKFCNSVVDLYSNLSKPFLDIVLYIFKLTSAIGAQGPASMMAYLLVSGLFLTRLRRPIGKMTIMEQKYEGEYRFVNSRLITNSEEIAFYNGNKREKQTIHSVFRKLVEHLHNFIFFRFSMGFIDSIIAKYIATVVGYLVVSRPFLDLAHPRHLHSTHSELLEDYYQSGRMLLRMSQALGRIVLAGREMTRLAGFTARITELMQVLKDLNHGKYERTMVSQQDKGIEGAQASPLIPGAGEIINADNIIKFDHVPLATPNGDILIQDLSFEVRSGANVLICGPNGCGKSSLFRVLGELWPLFGGHLTKPERGKLFYVPQRPYMTLGTLRDQVIYPDGKEDQKKKGISDQVLKGYLDNVQLGHILEREGGWDSVQDWMDVLSGGEKQRMAMARLFYHKPQFAILDECTSAVSVDVEDYIYSHCRKVGITLFTVSHRKSLWKHHEYYLHMDGRGNYEFKKITEDTVEFGS.

The interval 2–61 (AAFSKYLTARNSSLAGAAFLLFCLLHKRRRALGLHGKKSGKPPLQNNEKEGKKERAVVDK) is interaction with PEX19. N-linked (GlcNAc...) asparagine glycosylation is present at N12. At K61 the chain carries N6-acetyllysine. Residues 84-104 (GYLILIAVMLVSRTYCDVWMI) form a helical membrane-spanning segment. One can recognise an ABC transmembrane type-1 domain in the interval 85–372 (YLILIAVMLV…MLLRMSQALG (288 aa)). N-linked (GlcNAc...) asparagine glycosylation occurs at N106. Residues 126–146 (LFNFIAAMPLISLVNNFLKYG) traverse the membrane as a helical segment. N-linked (GlcNAc...) asparagine glycosylation is present at N206. A helical membrane pass occupies residues 224-244 (AIGAQGPASMMAYLLVSGLFL). K260 carries the post-translational modification N6-acetyllysine. A helical transmembrane segment spans residues 313 to 333 (MGFIDSIIAKYIATVVGYLVV). K399 carries the N6-acetyllysine modification. S424 carries the post-translational modification Phosphoserine. Residues 434–659 (INADNIIKFD…ITEDTVEFGS (226 aa)) form the ABC transporter domain. 473–480 (GPNGCGKS) contributes to the ATP binding site. At K533 the chain carries N6-acetyllysine. S659 bears the Phosphoserine mark.

This sequence belongs to the ABC transporter superfamily. ABCD family. Peroxisomal fatty acyl CoA transporter (TC 3.A.1.203) subfamily. Homodimers. Can form heterodimers with ABCD1 and ABCD2. Dimerization is necessary to form an active transporter. Interacts with PEX19; mediates the targeting of ABCD3 to peroxisomes. In terms of processing, ubiquitinated by PEX2 during pexophagy in response to starvation, leading to its degradation.

The protein resides in the peroxisome membrane. The catalysed reaction is a very long-chain fatty acyl-CoA + H2O = a very long-chain fatty acid + CoA + H(+). The enzyme catalyses a very long-chain fatty acid(in) + ATP + H2O = a very long-chain fatty acid(out) + ADP + phosphate + H(+). It catalyses the reaction a long-chain fatty acyl-CoA + H2O = a long-chain fatty acid + CoA + H(+). It carries out the reaction a long-chain fatty acid(in) + ATP + H2O = a long-chain fatty acid(out) + ADP + phosphate + H(+). The catalysed reaction is pristanoyl-CoA + H2O = 2,6,10,14-tetramethylpentadecanoate + CoA + H(+). The enzyme catalyses 2,6,10,14-tetramethylpentadecanoate(in) + ATP + H2O = 2,6,10,14-tetramethylpentadecanoate(out) + ADP + phosphate + H(+). It catalyses the reaction hexadecanedioyl-CoA + H2O = hexadecanedioate + CoA + H(+). It carries out the reaction hexadecanedioate(in) + ATP + H2O = hexadecanedioate(out) + ADP + phosphate + H(+). The catalysed reaction is (5Z,8Z,11Z,14Z,17Z)-eicosapentaenoyl-CoA + H2O = (5Z,8Z,11Z,14Z,17Z)-eicosapentaenoate + CoA + H(+). The enzyme catalyses (5Z,8Z,11Z,14Z,17Z)-eicosapentaenoate(in) + ATP + H2O = (5Z,8Z,11Z,14Z,17Z)-eicosapentaenoate(out) + ADP + phosphate + H(+). It catalyses the reaction (4Z,7Z,10Z,13Z,16Z,19Z)-docosahexaenoyl-CoA + H2O = (4Z,7Z,10Z,13Z,16Z,19Z)-docosahexaenoate + CoA + H(+). It carries out the reaction (4Z,7Z,10Z,13Z,16Z,19Z)-docosahexaenoate(in) + ATP + H2O = (4Z,7Z,10Z,13Z,16Z,19Z)-docosahexaenoate(out) + ADP + phosphate + H(+). Its function is as follows. Broad substrate specificity ATP-dependent transporter of the ATP-binding cassette (ABC) family that catalyzes the transport of long-chain fatty acids (LCFA)-CoA, dicarboxylic acids-CoA, long-branched-chain fatty acids-CoA and bile acids from the cytosol to the peroxisome lumen for beta-oxydation. Has fatty acyl-CoA thioesterase and ATPase activities. Probably hydrolyzes fatty acyl-CoAs into free fatty acids prior to their ATP-dependent transport into peroxisomes. Thus, play a role in regulation of LCFAs and energy metabolism namely, in the degradation and biosynthesis of fatty acids by beta-oxidation. This chain is ATP-binding cassette sub-family D member 3 (Abcd3), found in Rattus norvegicus (Rat).